Consider the following 150-residue polypeptide: Ribonuclease H (150 aa).

In terms of domain architecture, RNase H type-1 spans 3-144 (GEDIVEIYTD…ADALARQGMA (142 aa)). Mg(2+) is bound by residues Asp12, Glu50, Asp72, and Asp136.

This sequence belongs to the RNase H family. As to quaternary structure, monomer. The cofactor is Mg(2+).

The protein resides in the cytoplasm. The catalysed reaction is Endonucleolytic cleavage to 5'-phosphomonoester.. Functionally, endonuclease that specifically degrades the RNA of RNA-DNA hybrids. This is Ribonuclease H from Parvibaculum lavamentivorans (strain DS-1 / DSM 13023 / NCIMB 13966).